The sequence spans 304 residues: Ribosomal RNA small subunit methyltransferase H (304 aa).

Residues 36–38 (CGH), D55, F81, D102, and Q109 each bind S-adenosyl-L-methionine.

The protein belongs to the methyltransferase superfamily. RsmH family.

It is found in the cytoplasm. The enzyme catalyses cytidine(1402) in 16S rRNA + S-adenosyl-L-methionine = N(4)-methylcytidine(1402) in 16S rRNA + S-adenosyl-L-homocysteine + H(+). In terms of biological role, specifically methylates the N4 position of cytidine in position 1402 (C1402) of 16S rRNA. The polypeptide is Ribosomal RNA small subunit methyltransferase H (Onion yellows phytoplasma (strain OY-M)).